Here is a 364-residue protein sequence, read N- to C-terminus: tRNA 2-selenouridine synthase (364 aa).

Residues Leu14 to Ile137 enclose the Rhodanese domain. Residue Cys97 is the S-selanylcysteine intermediate of the active site.

This sequence belongs to the SelU family. Monomer.

The enzyme catalyses 5-methylaminomethyl-2-thiouridine(34) in tRNA + selenophosphate + (2E)-geranyl diphosphate + H2O + H(+) = 5-methylaminomethyl-2-selenouridine(34) in tRNA + (2E)-thiogeraniol + phosphate + diphosphate. It catalyses the reaction 5-methylaminomethyl-2-thiouridine(34) in tRNA + (2E)-geranyl diphosphate = 5-methylaminomethyl-S-(2E)-geranyl-thiouridine(34) in tRNA + diphosphate. It carries out the reaction 5-methylaminomethyl-S-(2E)-geranyl-thiouridine(34) in tRNA + selenophosphate + H(+) = 5-methylaminomethyl-2-(Se-phospho)selenouridine(34) in tRNA + (2E)-thiogeraniol. The catalysed reaction is 5-methylaminomethyl-2-(Se-phospho)selenouridine(34) in tRNA + H2O = 5-methylaminomethyl-2-selenouridine(34) in tRNA + phosphate. In terms of biological role, involved in the post-transcriptional modification of the uridine at the wobble position (U34) of tRNA(Lys), tRNA(Glu) and tRNA(Gln). Catalyzes the conversion of 2-thiouridine (S2U-RNA) to 2-selenouridine (Se2U-RNA). Acts in a two-step process involving geranylation of 2-thiouridine (S2U) to S-geranyl-2-thiouridine (geS2U) and subsequent selenation of the latter derivative to 2-selenouridine (Se2U) in the tRNA chain. This Shigella sonnei (strain Ss046) protein is tRNA 2-selenouridine synthase.